An 84-amino-acid polypeptide reads, in one-letter code: Large ribosomal subunit protein bL27 (84 aa).

The disordered stretch occupies residues 1–22 (MAHKKGGGSTKNGRDSNPKYLG).

This sequence belongs to the bacterial ribosomal protein bL27 family.

This is Large ribosomal subunit protein bL27 from Prosthecochloris aestuarii (strain DSM 271 / SK 413).